The chain runs to 438 residues: Glutaryl-CoA dehydrogenase, mitochondrial (438 aa).

Residues 1–44 constitute a mitochondrion transit peptide; that stretch reads MALRGVYAQLLNRGPGLRVFRSWSSATAQTEKGEKTQSRSAKPS. Substrate is bound by residues 138-139 and S186; that span reads RS. FAD-binding positions include 177–186, S186, and 212–214; these read FGLTEPNHGS and WIT. The residue at position 240 (K240) is an N6-acetyllysine. 287–294 provides a ligand contact to substrate; sequence FGCLNNAR. FAD contacts are provided by residues R319, Q330, and 387–391; that span reads DMLGG. The Proton acceptor role is filled by E414. Residue G415 coordinates substrate. FAD is bound by residues T416, 416-418, and F434; that span reads THD.

It belongs to the acyl-CoA dehydrogenase family. Homotetramer. Requires FAD as cofactor.

The protein resides in the mitochondrion matrix. It catalyses the reaction glutaryl-CoA + oxidized [electron-transfer flavoprotein] + 2 H(+) = (2E)-butenoyl-CoA + reduced [electron-transfer flavoprotein] + CO2. Its pathway is amino-acid metabolism; lysine degradation. It functions in the pathway amino-acid metabolism; tryptophan metabolism. Its function is as follows. Catalyzes the oxidative decarboxylation of glutaryl-CoA to crotonyl-CoA and CO(2) in the degradative pathway of L-lysine, L-hydroxylysine, and L-tryptophan metabolism. It uses electron transfer flavoprotein as its electron acceptor. The protein is Glutaryl-CoA dehydrogenase, mitochondrial (GCDH) of Bos taurus (Bovine).